Reading from the N-terminus, the 91-residue chain is Mercuric transport protein periplasmic component (91 aa).

Residues 1 to 19 (MKKLFASLALAAFVAPVFA) form the signal peptide. The HMA domain occupies 22–88 (QTVTLSVPGM…ATEDAGYPSS (67 aa)). The Hg(2+) site is built by Cys-33 and Cys-36.

Belongs to the MerP family. Monomer.

Its subcellular location is the periplasm. In terms of biological role, involved in mercury resistance. Acts as a mercury scavenger that specifically binds to a mercuric ion in the periplasm and probably passes it to the cytoplasmic mercuric reductase MerA via the mercuric transport protein MerT. This chain is Mercuric transport protein periplasmic component, found in Acinetobacter calcoaceticus.